A 1415-amino-acid polypeptide reads, in one-letter code: DNA-directed RNA polymerase subunit beta' (1415 aa).

Positions 214, 294, 301, and 304 each coordinate Zn(2+). Positions 1335 to 1351 (QNFVDSQGKPQSQSSFI) are enriched in polar residues. Positions 1335–1390 (QNFVDSQGKPQSQSSFIDDSMSEFSPVKDKSGSVLDDSDFPPGNFDSDFPADNYDL) are disordered.

It belongs to the RNA polymerase beta' chain family. RpoC2 subfamily. In cyanobacteria the RNAP catalytic core is composed of 2 alpha, 1 beta, 1 beta', 1 gamma and 1 omega subunit. When a sigma factor is associated with the core the holoenzyme is formed, which can initiate transcription. It depends on Zn(2+) as a cofactor.

The enzyme catalyses RNA(n) + a ribonucleoside 5'-triphosphate = RNA(n+1) + diphosphate. Its function is as follows. DNA-dependent RNA polymerase catalyzes the transcription of DNA into RNA using the four ribonucleoside triphosphates as substrates. This Trichodesmium erythraeum (strain IMS101) protein is DNA-directed RNA polymerase subunit beta'.